Consider the following 317-residue polypeptide: uncharacterized protein (317 aa).

Over residues 1–11 (MASAGAERRPG) the composition is skewed to basic and acidic residues. The disordered stretch occupies residues 1–164 (MASAGAERRP…KAKKRKSLGA (164 aa)). A compositionally biased stretch (polar residues) spans 19 to 34 (GQGQLTEEPGSAQTSE). Basic and acidic residues-rich tracts occupy residues 47–58 (HEARGTQSEDQR) and 71–92 (EGPK…ERGP). Basic residues-rich tracts occupy residues 100–110 (RPRHGPKRKPV) and 151–161 (KQHKKAKKRKS).

This is an uncharacterized protein from Homo sapiens (Human).